Consider the following 775-residue polypeptide: Beta-galactosidase 7 (775 aa).

Positions 1-17 (MRGGMAITAALVVVAAA) are cleaved as a signal peptide. Glu-185 serves as the catalytic Proton donor. Catalysis depends on Glu-256, which acts as the Nucleophile. Asn-257, Asn-266, Asn-277, Asn-358, and Asn-602 each carry an N-linked (GlcNAc...) asparagine glycan. The region spanning 689 to 775 (RGKVPKVRIW…KSLLVVADCR (87 aa)) is the SUEL-type lectin domain.

It belongs to the glycosyl hydrolase 35 family.

Its subcellular location is the secreted. The protein resides in the extracellular space. It is found in the apoplast. The catalysed reaction is Hydrolysis of terminal non-reducing beta-D-galactose residues in beta-D-galactosides.. The chain is Beta-galactosidase 7 from Oryza sativa subsp. japonica (Rice).